Reading from the N-terminus, the 1845-residue chain is Collagen alpha-1(XXVII) chain (1845 aa).

An N-terminal signal peptide occupies residues M1–G39. A propeptide spans A40–M609 (N-terminal propeptide). A Laminin G-like domain is found at P72–C237. N272 is a glycosylation site (N-linked (GlcNAc...) asparagine). Disordered stretches follow at residues T299–T478, P502–T572, L608–P774, and L827–Q1608. The span at H312 to K323 shows a compositional bias: polar residues. Low complexity-rich tracts occupy residues R327–R343 and T356–P372. N340 carries N-linked (GlcNAc...) asparagine glycosylation. Positions P429 to L439 are enriched in pro residues. The span at G444–V454 shows a compositional bias: polar residues. A compositionally biased stretch (basic and acidic residues) spans S554–T564. Collagen-like domains follow at residues G610–G664, G673–V732, G742–P801, G817–L876, G877–M936, G937–K996, G997–R1038, G1039–G1096, G1117–E1176, G1177–K1236, and G1240–K1299. Residues G610–P1603 are triple-helical. Pro residues predominate over residues R639–P654. 2 stretches are compositionally biased toward low complexity: residues N677–L690 and P699–A719. Residues G865–G874 show a composition bias toward gly residues. Residues F896–E909 show a composition bias toward low complexity. Gly residues predominate over residues G1018–G1027. Low complexity-rich tracts occupy residues R1074–A1086, L1112–Q1122, and K1152–I1167. 2 stretches are compositionally biased toward basic and acidic residues: residues L1187–D1212 and R1226–Q1238. Composition is skewed to basic and acidic residues over residues K1311–T1323 and P1335–P1345. Residues G1325–K1384 form the Collagen-like 12 domain. Low complexity-rich tracts occupy residues R1360–P1369, K1395–P1422, and P1438–A1465. 3 Collagen-like domains span residues G1424 to P1483, G1484 to Q1543, and G1544 to P1603. The segment covering I1557 to P1572 has biased composition (low complexity). Positions R1588–H1605 are enriched in pro residues. Positions I1607–L1845 are cleaved as a propeptide — C-terminal propeptide. A Fibrillar collagen NC1 domain is found at G1645–L1845. Intrachain disulfides connect C1675/C1707, C1716/C1843, and C1752/C1796. 4 residues coordinate Ca(2+): D1693, N1695, C1698, and D1701. N1754 carries N-linked (GlcNAc...) asparagine glycosylation.

This sequence belongs to the fibrillar collagen family. In terms of tissue distribution, highly expressed in cartilage, eye and ear.

Its subcellular location is the secreted. The protein resides in the extracellular space. It localises to the extracellular matrix. Plays a role during the calcification of cartilage and the transition of cartilage to bone. The sequence is that of Collagen alpha-1(XXVII) chain (Col27a1) from Mus musculus (Mouse).